A 356-amino-acid polypeptide reads, in one-letter code: Methionine import ATP-binding protein MetN (356 aa).

The ABC transporter domain occupies 7 to 250; that stretch reads IKLDNIDVTF…PRESLTQDFI (244 aa). ATP is bound at residue 43–50; sequence GYSGAGKS.

Belongs to the ABC transporter superfamily. Methionine importer (TC 3.A.1.24) family. The complex is composed of two ATP-binding proteins (MetN), two transmembrane proteins (MetI) and a solute-binding protein (MetQ).

Its subcellular location is the cell membrane. It catalyses the reaction L-methionine(out) + ATP + H2O = L-methionine(in) + ADP + phosphate + H(+). The catalysed reaction is D-methionine(out) + ATP + H2O = D-methionine(in) + ADP + phosphate + H(+). Functionally, part of the ABC transporter complex MetNIQ involved in methionine import. Responsible for energy coupling to the transport system. This is Methionine import ATP-binding protein MetN from Streptococcus agalactiae serotype III (strain NEM316).